Reading from the N-terminus, the 380-residue chain is MAKRDYYETLGVAKNASEEDIKKAYRKLAMKHHPDRNQGDGAKKAEESFKEAKEAYEMLSDAQKRAAYDQYGHAGVDPNMGGRGAGGPEAYGGFAEAFGDIFGDIFGQNGQRRGPGGQQVYRGNDLSYAMEITLEEAARGKDTQIRIPSWDSCSTCDGTGAKPGTSAKTCPTCSGSGQVHLRQGFFSIQQTCPSCHGTGKIIPEPCTACNGAGRIKSNKTLEVKIPAGINEGMRIRSAGNGEPGTNGGPAGDLYIEIRIKAHDIFERDGDDLHCTIPIGIATATLGGAIEVPTLGGKAEIELPEGTQHGKTFRLRGKGIKGVRSSYPGDLYCHVAVETPIKLTEHQRKLLRELDESLKKGGERHSPNAKSWTDRVKDLFK.

The J domain maps to 5–72 (DYYETLGVAK…QKRAAYDQYG (68 aa)). The segment at 140–218 (GKDTQIRIPS…CNGAGRIKSN (79 aa)) adopts a CR-type zinc-finger fold. Zn(2+) is bound by residues Cys153, Cys156, Cys170, Cys173, Cys192, Cys195, Cys206, and Cys209. CXXCXGXG motif repeat units follow at residues 153-160 (CSTCDGTG), 170-177 (CPTCSGSG), 192-199 (CPSCHGTG), and 206-213 (CTACNGAG). The interval 357–380 (LKKGGERHSPNAKSWTDRVKDLFK) is disordered.

It belongs to the DnaJ family. In terms of assembly, homodimer. Zn(2+) is required as a cofactor.

Its subcellular location is the cytoplasm. Participates actively in the response to hyperosmotic and heat shock by preventing the aggregation of stress-denatured proteins and by disaggregating proteins, also in an autonomous, DnaK-independent fashion. Unfolded proteins bind initially to DnaJ; upon interaction with the DnaJ-bound protein, DnaK hydrolyzes its bound ATP, resulting in the formation of a stable complex. GrpE releases ADP from DnaK; ATP binding to DnaK triggers the release of the substrate protein, thus completing the reaction cycle. Several rounds of ATP-dependent interactions between DnaJ, DnaK and GrpE are required for fully efficient folding. Also involved, together with DnaK and GrpE, in the DNA replication of plasmids through activation of initiation proteins. The chain is Chaperone protein DnaJ from Methylibium petroleiphilum (strain ATCC BAA-1232 / LMG 22953 / PM1).